The following is a 300-amino-acid chain: MMGKEEEIARIARRLDKMVTKKSAEGAMDLLRELKAMPVTLHLLQSTRVGMSVNALRKQSSDEEVVTLAKSLIKSWKKLLDASDAKARERRRGGSLPTSSSKEASEAQDPSRKRPELPRMPSTPRITTFPPVPVTCDAVRTKCREMLTAALQTDHDHVAIGADCECLAGQIEECIFRDVGNTDMKYKNRVRSRLSNLKDAKNPGLRRKVLCGAITPQQIAVMTSEEMASDELKEIRKAMTKEAIREHQMARTGGTQTDLFTCGKCRKKNCTYTQVQTRSSDEPMTTFVVCNECGNRWKFC.

The region spanning 6-83 (EEIARIARRL…KSWKKLLDAS (78 aa)) is the TFIIS N-terminal domain. Lys-58 is covalently cross-linked (Glycyl lysine isopeptide (Lys-Gly) (interchain with G-Cter in ubiquitin)). Phosphoserine occurs at positions 60 and 101. Positions 84–131 (DAKARERRRGGSLPTSSSKEASEAQDPSRKRPELPRMPSTPRITTFPP) are disordered. Positions 103–117 (EASEAQDPSRKRPEL) are enriched in basic and acidic residues. The TFIIS central domain maps to 139–255 (VRTKCREMLT…EHQMARTGGT (117 aa)). The TFIIS-type zinc finger occupies 258-298 (DLFTCGKCRKKNCTYTQVQTRSSDEPMTTFVVCNECGNRWK). Cys-262, Cys-265, Cys-290, and Cys-293 together coordinate Zn(2+).

This sequence belongs to the TFS-II family. Interacts with the basal transcription factor GTF2B. Interacts with REXO1.

The protein localises to the nucleus. Functionally, necessary for efficient RNA polymerase II transcription elongation past template-encoded arresting sites. The arresting sites in DNA have the property of trapping a certain fraction of elongating RNA polymerases that pass through, resulting in locked ternary complexes. Cleavage of the nascent transcript by S-II allows the resumption of elongation from the new 3'-terminus. The polypeptide is Transcription elongation factor A protein 2 (TCEA2) (Bos taurus (Bovine)).